Reading from the N-terminus, the 471-residue chain is ATP synthase subunit beta (471 aa).

159-166 (GGAGVGKT) is a binding site for ATP.

This sequence belongs to the ATPase alpha/beta chains family. F-type ATPases have 2 components, CF(1) - the catalytic core - and CF(0) - the membrane proton channel. CF(1) has five subunits: alpha(3), beta(3), gamma(1), delta(1), epsilon(1). CF(0) has four main subunits: a(1), b(1), b'(1) and c(9-12).

The protein resides in the cell membrane. It carries out the reaction ATP + H2O + 4 H(+)(in) = ADP + phosphate + 5 H(+)(out). Produces ATP from ADP in the presence of a proton gradient across the membrane. The catalytic sites are hosted primarily by the beta subunits. This chain is ATP synthase subunit beta, found in Heliobacterium modesticaldum (strain ATCC 51547 / Ice1).